We begin with the raw amino-acid sequence, 611 residues long: Glutamine--fructose-6-phosphate aminotransferase [isomerizing] (611 aa).

C2 functions as the Nucleophile; for GATase activity in the catalytic mechanism. The Glutamine amidotransferase type-2 domain maps to 2–219 (CGIVGGVSKT…DGDVAMLQRQ (218 aa)). 2 consecutive SIS domains span residues 287-427 (AAAM…APGA) and 460-601 (WAAR…VDRP). The For Fru-6P isomerization activity role is filled by K606.

Homodimer.

It localises to the cytoplasm. The catalysed reaction is D-fructose 6-phosphate + L-glutamine = D-glucosamine 6-phosphate + L-glutamate. Catalyzes the first step in hexosamine metabolism, converting fructose-6P into glucosamine-6P using glutamine as a nitrogen source. The polypeptide is Glutamine--fructose-6-phosphate aminotransferase [isomerizing] (Acidithiobacillus ferridurans).